The sequence spans 269 residues: Shikimate dehydrogenase (NADP(+)) (269 aa).

Residues 14-16 (SLS) and Thr-61 each bind shikimate. The Proton acceptor role is filled by Lys-65. An NADP(+)-binding site is contributed by Glu-76. The shikimate site is built by Asn-85 and Asp-99. NADP(+) contacts are provided by residues 123 to 127 (GAGGA), 146 to 151 (NRTPER), and Ile-209. Tyr-211 is a binding site for shikimate. Position 231 (Gly-231) interacts with NADP(+).

The protein belongs to the shikimate dehydrogenase family. As to quaternary structure, homodimer.

It carries out the reaction shikimate + NADP(+) = 3-dehydroshikimate + NADPH + H(+). Its pathway is metabolic intermediate biosynthesis; chorismate biosynthesis; chorismate from D-erythrose 4-phosphate and phosphoenolpyruvate: step 4/7. Functionally, involved in the biosynthesis of the chorismate, which leads to the biosynthesis of aromatic amino acids. Catalyzes the reversible NADPH linked reduction of 3-dehydroshikimate (DHSA) to yield shikimate (SA). The chain is Shikimate dehydrogenase (NADP(+)) from Methanothrix thermoacetophila (strain DSM 6194 / JCM 14653 / NBRC 101360 / PT) (Methanosaeta thermophila).